Here is a 318-residue protein sequence, read N- to C-terminus: Lymphatic vessel endothelial hyaluronic acid receptor 1 (318 aa).

A signal peptide spans 1 to 23 (MLQHTSLVLLLASIWTTRHPVQG). The Extracellular segment spans residues 24-234 (ADLVQDLSIS…EAAGFGGVPT (211 aa)). The 91-residue stretch at 39 to 129 (GVALVGRNKN…SQKFKAYCHN (91 aa)) folds into the Link domain. N-linked (GlcNAc...) asparagine glycosylation occurs at Asn-52. 2 disulfide bridges follow: Cys-60–Cys-127 and Cys-84–Cys-105. A glycan (N-linked (GlcNAc...) asparagine) is linked at Asn-129. The chain crosses the membrane as a helical span at residues 235–255 (ALLVLALLFFGAAAVLAVCYV). The Cytoplasmic segment spans residues 256–318 (KRYVKAFPFT…TTVRCLEAEV (63 aa)). Basic and acidic residues predominate over residues 284-305 (ADDVNANEESKKTIKNPEEAKS). The disordered stretch occupies residues 284 to 318 (ADDVNANEESKKTIKNPEEAKSPPKTTVRCLEAEV).

Homodimer; disulfide-linked. Interacts with PDGFB and IGFBP3. Forms a transient ternary complex with PDGFB and PDGFRB in TGN. Post-translationally, O-glycosylated.

The protein resides in the membrane. Ligand-specific transporter trafficking between intracellular organelles (TGN) and the plasma membrane. Plays a role in autocrine regulation of cell growth mediated by growth regulators containing cell surface retention sequence binding (CRS). May act as a hyaluronan (HA) transporter, either mediating its uptake for catabolism within lymphatic endothelial cells themselves, or its transport into the lumen of afferent lymphatic vessels for subsequent re-uptake and degradation in lymph nodes. Binds to pericelluar hyaluronan matrices deposited on the surface of leukocytes and facilitates cell adhesion and migration through lymphatic endothelium. In Mus musculus (Mouse), this protein is Lymphatic vessel endothelial hyaluronic acid receptor 1 (Lyve1).